Here is a 641-residue protein sequence, read N- to C-terminus: Probable serine protease FE772_23065 (641 aa).

A helical membrane pass occupies residues 532–552 (WVELIAILAAAGWIRVMLIGL).

It belongs to the peptidase S1 family.

It is found in the cell inner membrane. Functionally, possibly a dedicated protease for substrate gasdermin bGSDM; cleaves the bGSDM precursor, releasing the pore-forming moiety, which integrates into the membrane and triggers cell death. Involved in defense against bacteriophages. When this probable 4 gene operon (bGSDM-FE772_23060-FE772_23065-FE772_23070) is inserted into E.coli it provides nearly 100-fold protection against phages T5 and T6 and about 8-fold against phage T4. The operon without bGSDM no longer protects against phage. This is Probable serine protease FE772_23065 from Lysobacter enzymogenes.